A 170-amino-acid chain; its full sequence is Lipoprotein signal peptidase (170 aa).

4 consecutive transmembrane segments (helical) span residues L11–F31, I41–S61, W69–L89, and N95–Y115. Residues D125 and D144 contribute to the active site. Residues Y136 to L156 form a helical membrane-spanning segment.

This sequence belongs to the peptidase A8 family.

It is found in the cell inner membrane. It catalyses the reaction Release of signal peptides from bacterial membrane prolipoproteins. Hydrolyzes -Xaa-Yaa-Zaa-|-(S,diacylglyceryl)Cys-, in which Xaa is hydrophobic (preferably Leu), and Yaa (Ala or Ser) and Zaa (Gly or Ala) have small, neutral side chains.. It participates in protein modification; lipoprotein biosynthesis (signal peptide cleavage). In terms of biological role, this protein specifically catalyzes the removal of signal peptides from prolipoproteins. This is Lipoprotein signal peptidase from Pseudomonas fluorescens (strain ATCC BAA-477 / NRRL B-23932 / Pf-5).